The sequence spans 630 residues: A-type voltage-gated potassium channel KCND2 (630 aa).

Residues 1–184 (MAAGVAAWLP…FENPHTSTMA (184 aa)) lie on the Cytoplasmic side of the membrane. Residues 2–20 (AAGVAAWLPFARAAAIGWM) are interaction with KCNIP1, KCNIP2, and other family members. T38 is subject to Phosphothreonine. The interaction with KCNIP1 stretch occupies residues 71–90 (ERDFFYHPETQQYFFDRDPD). H105, C111, C132, and C133 together coordinate Zn(2+). Residues 185–206 (LVFYYVTGFFIAVSVIANVVET) form a helical membrane-spanning segment. The Extracellular portion of the chain corresponds to 207-226 (VPCGSSPGHIKELPCGERYA). A helical transmembrane segment spans residues 227 to 249 (VAFFCLDTACVMIFTVEYLLRLA). The Cytoplasmic portion of the chain corresponds to 250-256 (AAPSRYR). The helical transmembrane segment at 257 to 281 (FVRSVMSIIDVVAILPYYIGLVMTD) threads the bilayer. Over 282-287 (NEDVSG) the chain is Extracellular. The chain crosses the membrane as a helical; Voltage-sensor span at residues 288-307 (AFVTLRVFRVFRIFKFSRHS). At 308-321 (QGLRILGYTLKSCA) the chain is on the cytoplasmic side. Positions 308-321 (QGLRILGYTLKSCA) are S4-S5 linker. The chain crosses the membrane as a helical span at residues 322–345 (SELGFLLFSLTMAIIIFATVMFYA). At 346-357 (EKGSSASKFTSI) the chain is on the extracellular side. The helical intramembrane region spans 358–369 (PAAFWYTIVTMT). K(+)-binding residues include T370, L371, G372, and Y373. Residues 370-375 (TLGYGD) carry the Selectivity filter motif. Residues 370 to 377 (TLGYGDMV) lie within the membrane without spanning it. The Extracellular portion of the chain corresponds to 378-380 (PKT). Residues 381 to 403 (IAGKIFGSICSLSGVLVIALPVP) form a helical membrane-spanning segment. At 404–630 (VIVSNFSRIY…GGNIVRVSAL (227 aa)) the chain is on the cytoplasmic side. Position 438 is a phosphoserine (S438). Positions 474–489 (FETQHHHLLHCLEKTT) are required for dendritic targeting. Positions 474-630 (FETQHHHLLH…GGNIVRVSAL (157 aa)) are important for normal channel activation and inactivation, for interaction with KCNIP2, and probably other family members as well. A phosphoserine mark is found at S548, S552, S572, and S575. Residues 600–630 (IPTPPVTTPEGDDRPESPEYSGGNIVRVSAL) are disordered. A phosphothreonine mark is found at T602 and T607. S616 is subject to Phosphoserine. The PDZ-binding motif lies at 627 to 630 (VSAL).

It belongs to the potassium channel family. D (Shal) (TC 1.A.1.2) subfamily. Kv4.2/KCND2 sub-subfamily. In terms of assembly, homotetramer or heterotetramer with KCND1 or KCND3. Associates with the regulatory subunits KCNIP2, KCNIP3 and KCNIP4. Interacts with the regulatory subunit KCNIP1; this interaction mediates the capture of both the N- and C-terminus of KCND2, preventing N-type inactivation and stabilizing the S6 conformation, thereby accelerating closed state inactivation and recovery. In vivo, probably exists as heteromeric complex containing variable proportions of KCND1, KCND2, KCND3, KCNIP1, KCNIP2, KCNIP3, KCNIP4, DPP6 and DPP10. The tetrameric channel can associate with up to four regulatory subunits, such as KCNIP2 or KCNIP4. Interaction with four KCNIP4 chains does not reduce interaction with DPP10. Interacts with DLG4 and NCS1/FREQ. Interacts with DLG1. Probably part of a complex consisting of KCNIP1, KCNIP2 isoform 3 and KCND2. Interacts with FLNA, FLNC and DPP10. Interacts (via S1 and S2 helices) with DPP6; this interaction stabilizes the conformation of the S1-S2 helices and facilitates S4 conformational change, including S4 sliding up and down, thereby accelerating activation, inactivation, and recovery. In terms of processing, phosphorylation at Ser-438 in response to MAPK activation is increased in stimulated dendrites. Interaction with KCNIP2 and DPP6 propomtes phosphorylation by PKA at Ser-552. Phosphorylation at Ser-552 has no effect on interaction with KCNIP3, but is required for the regulation of channel activity by KCNIP3. Phosphorylation at Ser-552 leads to KCND2 internalization. Phosphorylated by MAPK in response to signaling via the metabotropic glutamate receptor GRM5. Phosphorylation at Ser-616 is required for the down-regulation of neuronal A-type currents in response to signaling via GRM5. As to expression, detected in ovary, in corpus luteum and in granulosa and theca cells in the follicle (at protein level). Highly expressed throughout the brain. Detected in amygdala, caudate nucleus, cerebellum, hippocampus, substantia nigra and thalamus. Expression is not detectable or very low in heart, kidney, liver, lung, pancreas and skeletal muscle. Not detectable in human heart atrium.

The protein localises to the cell membrane. The protein resides in the cell projection. Its subcellular location is the dendrite. It localises to the synapse. It is found in the perikaryon. The protein localises to the postsynaptic cell membrane. The protein resides in the dendritic spine. Its subcellular location is the cell junction. It catalyses the reaction K(+)(in) = K(+)(out). In terms of biological role, voltage-gated potassium channel that mediates transmembrane potassium transport in excitable membranes, primarily in the brain. Mediates the major part of the dendritic A-type current I(SA) in brain neurons. This current is activated at membrane potentials that are below the threshold for action potentials. It regulates neuronal excitability, prolongs the latency before the first spike in a series of action potentials, regulates the frequency of repetitive action potential firing, shortens the duration of action potentials and regulates the back-propagation of action potentials from the neuronal cell body to the dendrites. Contributes to the regulation of the circadian rhythm of action potential firing in suprachiasmatic nucleus neurons, which regulates the circadian rhythm of locomotor activity. Functions downstream of the metabotropic glutamate receptor GRM5 and plays a role in neuronal excitability and in nociception mediated by activation of GRM5. Mediates the transient outward current I(to) in rodent heart left ventricle apex cells, but not in human heart, where this current is mediated by another family member. Forms tetrameric potassium-selective channels through which potassium ions pass in accordance with their electrochemical gradient. The channel alternates between opened and closed conformations in response to the voltage difference across the membrane. Can form functional homotetrameric channels and heterotetrameric channels that contain variable proportions of KCND2 and KCND3; channel properties depend on the type of pore-forming alpha subunits that are part of the channel. In vivo, membranes probably contain a mixture of heteromeric potassium channel complexes. Interaction with specific isoforms of the regulatory subunits KCNIP1, KCNIP2, KCNIP3 or KCNIP4 strongly increases expression at the cell surface and thereby increases channel activity; it modulates the kinetics of channel activation and inactivation, shifts the threshold for channel activation to more negative voltage values, shifts the threshold for inactivation to less negative voltages and accelerates recovery after inactivation. Likewise, interaction with DPP6 or DPP10 promotes expression at the cell membrane and regulates both channel characteristics and activity. Upon depolarization, the channel goes from a resting closed state (C state) to an activated but non-conducting state (C* state), from there, the channel may either inactivate (I state) or open (O state). In Homo sapiens (Human), this protein is A-type voltage-gated potassium channel KCND2.